A 134-amino-acid polypeptide reads, in one-letter code: Small ribosomal subunit protein uS9c (134 aa).

The segment covering 105–114 (DHHLTRDARA) has biased composition (basic and acidic residues). Residues 105–134 (DHHLTRDARAKERKKYGLHKARKAPQYSKR) form a disordered region. A compositionally biased stretch (basic residues) spans 115–134 (KERKKYGLHKARKAPQYSKR).

The protein belongs to the universal ribosomal protein uS9 family.

It is found in the plastid. The protein resides in the cyanelle. The sequence is that of Small ribosomal subunit protein uS9c (rps9) from Cyanophora paradoxa.